The primary structure comprises 2376 residues: MAG2-interacting protein 2 (2376 aa).

In terms of assembly, forms a complex with MAG2, ZW10/MIP1 and MIP3 on the endoplasmic reticulum.

The protein resides in the endoplasmic reticulum membrane. In terms of biological role, required for proper maturation of seed storage proteins. Forms a complex with MAG2, ZW10/MIP1 and MIP3 on the endoplasmic reticulum that may be responsible for efficient transport of seed storage proteins. The polypeptide is MAG2-interacting protein 2 (Arabidopsis thaliana (Mouse-ear cress)).